A 77-amino-acid chain; its full sequence is uncharacterized protein (77 aa).

The tract at residues 53–77 (KRVSSEANKEKSDITELLRKQVRPD) is disordered.

This is an uncharacterized protein from Escherichia coli (strain K12).